A 264-amino-acid polypeptide reads, in one-letter code: MSKLKLHGFNNLTKSLSFCIYDICYAKTADDRDGYIAYIDEQYNANRLTEILSETCSIIGANILNIARQDYDPQGASVTILVSEEPVDPRDVDTSEHPGPLPSAVVAHLDKSHICVHTYPESHPEAGLCTFRADIEVSTCGVISPLKALNYLIHQLESDIVTMDYRVRGFTRDINGVKHFIDHKINSIQNFMSDDMKSLYHMMDVNVYQENIFHTKMMLKDFDLKHYLFNAKPEELSAEEKEQITRLLYKEMQEIYYGRNVPEV.

The active-site Schiff-base intermediate with substrate; via pyruvic acid is Ser112. Ser112 carries the pyruvic acid (Ser); by autocatalysis modification. The Proton acceptor; for processing activity role is filled by His117. Cys140 acts as the Proton donor; for catalytic activity in catalysis.

The protein belongs to the prokaryotic AdoMetDC family. Type 2 subfamily. In terms of assembly, heterooctamer of four alpha and four beta chains arranged as a tetramer of alpha/beta heterodimers. Pyruvate is required as a cofactor. Is synthesized initially as an inactive proenzyme. Formation of the active enzyme involves a self-maturation process in which the active site pyruvoyl group is generated from an internal serine residue via an autocatalytic post-translational modification. Two non-identical subunits are generated from the proenzyme in this reaction, and the pyruvate is formed at the N-terminus of the alpha chain, which is derived from the carboxyl end of the proenzyme. The post-translation cleavage follows an unusual pathway, termed non-hydrolytic serinolysis, in which the side chain hydroxyl group of the serine supplies its oxygen atom to form the C-terminus of the beta chain, while the remainder of the serine residue undergoes an oxidative deamination to produce ammonia and the pyruvoyl group blocking the N-terminus of the alpha chain.

It catalyses the reaction S-adenosyl-L-methionine + H(+) = S-adenosyl 3-(methylsulfanyl)propylamine + CO2. It participates in amine and polyamine biosynthesis; S-adenosylmethioninamine biosynthesis; S-adenosylmethioninamine from S-adenosyl-L-methionine: step 1/1. Catalyzes the decarboxylation of S-adenosylmethionine to S-adenosylmethioninamine (dcAdoMet), the propylamine donor required for the synthesis of the polyamines spermine and spermidine from the diamine putrescine. The sequence is that of S-adenosylmethionine decarboxylase proenzyme from Yersinia pseudotuberculosis serotype O:1b (strain IP 31758).